The following is a 238-amino-acid chain: Pyridoxine 5'-phosphate synthase (238 aa).

Asn-7 contacts 3-amino-2-oxopropyl phosphate. 9–10 contacts 1-deoxy-D-xylulose 5-phosphate; the sequence is DH. Arg-18 is a binding site for 3-amino-2-oxopropyl phosphate. The active-site Proton acceptor is the His-43. 2 residues coordinate 1-deoxy-D-xylulose 5-phosphate: Arg-45 and His-50. Catalysis depends on Glu-70, which acts as the Proton acceptor. Thr-100 is a 1-deoxy-D-xylulose 5-phosphate binding site. The active-site Proton donor is the His-191. Residues Gly-192 and 213-214 contribute to the 3-amino-2-oxopropyl phosphate site; that span reads GH.

This sequence belongs to the PNP synthase family. Homooctamer; tetramer of dimers.

Its subcellular location is the cytoplasm. It carries out the reaction 3-amino-2-oxopropyl phosphate + 1-deoxy-D-xylulose 5-phosphate = pyridoxine 5'-phosphate + phosphate + 2 H2O + H(+). It participates in cofactor biosynthesis; pyridoxine 5'-phosphate biosynthesis; pyridoxine 5'-phosphate from D-erythrose 4-phosphate: step 5/5. Catalyzes the complicated ring closure reaction between the two acyclic compounds 1-deoxy-D-xylulose-5-phosphate (DXP) and 3-amino-2-oxopropyl phosphate (1-amino-acetone-3-phosphate or AAP) to form pyridoxine 5'-phosphate (PNP) and inorganic phosphate. The polypeptide is Pyridoxine 5'-phosphate synthase (Thermosynechococcus vestitus (strain NIES-2133 / IAM M-273 / BP-1)).